The sequence spans 644 residues: Exoribonuclease 2 (644 aa).

The 328-residue stretch at 189–516 folds into the RNB domain; that stretch reads REDLTALNFV…NHRLLKAVIT (328 aa). The S1 motif domain occupies 561–643; it reads DIRFNAEIID…ETRGIVAKPA (83 aa).

The protein belongs to the RNR ribonuclease family. RNase II subfamily.

Its subcellular location is the cytoplasm. The enzyme catalyses Exonucleolytic cleavage in the 3'- to 5'-direction to yield nucleoside 5'-phosphates.. Involved in mRNA degradation. Hydrolyzes single-stranded polyribonucleotides processively in the 3' to 5' direction. This chain is Exoribonuclease 2, found in Pectobacterium atrosepticum (strain SCRI 1043 / ATCC BAA-672) (Erwinia carotovora subsp. atroseptica).